The following is a 454-amino-acid chain: Protein phosphatase 1F (454 aa).

Polar residues predominate over residues 1-12 (MSSGAPQKSSPM). The interval 1 to 28 (MSSGAPQKSSPMASGAEETPGFLDTLLQ) is disordered. The PPM-type phosphatase domain maps to 156–413 (LVSIHAIRNT…DNITVMVVFL (258 aa)). Asp198, Gly199, Asp360, and Asp404 together coordinate Mn(2+). Residues 419–454 (LLEGGNQGEGDPQAEGRRQDLPSSLPEPETQAPPRS) form a disordered region. The residue at position 454 (Ser454) is a Phosphoserine.

This sequence belongs to the PP2C family. As to quaternary structure, associates with FEM1B. Requires Mg(2+) as cofactor. The cofactor is Mn(2+).

It catalyses the reaction O-phospho-L-seryl-[protein] + H2O = L-seryl-[protein] + phosphate. The enzyme catalyses O-phospho-L-threonyl-[protein] + H2O = L-threonyl-[protein] + phosphate. Its function is as follows. Dephosphorylates and concomitantly deactivates CaM-kinase II activated upon autophosphorylation, and CaM-kinases IV and I activated upon phosphorylation by CaM-kinase kinase. Promotes apoptosis. The protein is Protein phosphatase 1F (PPM1F) of Homo sapiens (Human).